The sequence spans 805 residues: U-box domain-containing protein 32 (805 aa).

2 disordered regions span residues 181-205 and 226-284; these read SNNR…SEKL and EKDT…EREG. The segment covering 226–239 has biased composition (basic and acidic residues); that stretch reads EKDTGQLEREKVEP. Positions 245 to 257 are enriched in low complexity; sequence FSSGSSSSFGEPV. Positions 331 to 434 form a coiled coil; it reads LEGLCIKESS…EVNALRRLVK (104 aa). The Protein kinase domain maps to 460–718; sequence FDPSWKLGEG…FIDRMKAPEV (259 aa). Residues 466–474 and lysine 487 contribute to the ATP site; that span reads LGEGKYGSV. Residues 734–805 enclose the U-box domain; the sequence is RPPSHYLCPI…LAIQDWQNQW (72 aa).

It belongs to the protein kinase superfamily. Ser/Thr protein kinase family.

The enzyme catalyses S-ubiquitinyl-[E2 ubiquitin-conjugating enzyme]-L-cysteine + [acceptor protein]-L-lysine = [E2 ubiquitin-conjugating enzyme]-L-cysteine + N(6)-ubiquitinyl-[acceptor protein]-L-lysine.. It functions in the pathway protein modification; protein ubiquitination. In terms of biological role, functions as an E3 ubiquitin ligase. The polypeptide is U-box domain-containing protein 32 (PUB32) (Arabidopsis thaliana (Mouse-ear cress)).